Here is a 242-residue protein sequence, read N- to C-terminus: uncharacterized protein (242 aa).

A signal peptide spans methionine 1 to alanine 20.

It belongs to the periplasmic pilus chaperone family.

The protein resides in the periplasm. Could be required for the biogenesis of the putative YbgD fimbria. This is an uncharacterized protein from Escherichia coli (strain K12).